The sequence spans 22 residues: Chlorophyllase type 1 (22 aa).

The protein belongs to the AB hydrolase superfamily. Lipase family.

It carries out the reaction a chlorophyll + H2O = a chlorophyllide + phytol + H(+). It participates in porphyrin-containing compound metabolism; chlorophyll degradation. Functionally, catalyzes the hydrolysis of ester bond in chlorophyll to yield chlorophyllide and phytol. This is Chlorophyllase type 1 from Chenopodium album (Fat hen).